The primary structure comprises 557 residues: MPMLKDPSQKYRPFAPIALRDRTWPDRVIDKAPLWLSTDLRDGNQSLIEPMDAAKKMRFFKTLVQVGLKEIEVGFPSASQTDFDFVRELIEGGHIPDDVTIQVLTQARDDLIERTFESLKGAKKAIVHYYNACAPSFRRIVFDQDKEGVKRIAVAAGRTIKRLAAAAPETRWGFEYSPEVFSSTESDFAVEVCNAVVEVFQPTPANRLILNLPATIECATPNHYADQIEWFCRHVDRRDSVIVSLHTHNDRGTGVAASELGLMAGADRVEGCLFGNGERTGNVDLVTLALNLYTQGVDPGLDFSDIDAVRKVVEECNQLPVHPRHPYVGDLVHTAFSGSHQDAIRKGFAQQDPEGVWEVPYLPIDPADIGRSYEAVIRVNSQSGKGGIAYLLEQEYGISLPRRMQIEFSQVVQKETDRLGLEMSAAQIHALLEAEYLRAETPYALKGHRLQEENGTCALDVEVFDKGESRHWRGIGKGPLEALVACLPVRVEIMDYHEHAIGAGSHARAAAYIELRLDGQRSLHGLGIDENLTTASIRALFSALNRALGQQASIRAA.

A Pyruvate carboxyltransferase domain is found at P33–D307. D42, H246, H248, and N282 together coordinate Mg(2+). Positions A439 to A557 are regulatory domain.

The protein belongs to the alpha-IPM synthase/homocitrate synthase family. LeuA type 2 subfamily. As to quaternary structure, homodimer. Mg(2+) is required as a cofactor.

Its subcellular location is the cytoplasm. The catalysed reaction is 3-methyl-2-oxobutanoate + acetyl-CoA + H2O = (2S)-2-isopropylmalate + CoA + H(+). It functions in the pathway amino-acid biosynthesis; L-leucine biosynthesis; L-leucine from 3-methyl-2-oxobutanoate: step 1/4. Catalyzes the condensation of the acetyl group of acetyl-CoA with 3-methyl-2-oxobutanoate (2-ketoisovalerate) to form 3-carboxy-3-hydroxy-4-methylpentanoate (2-isopropylmalate). The sequence is that of 2-isopropylmalate synthase from Azotobacter vinelandii (strain DJ / ATCC BAA-1303).